Consider the following 75-residue polypeptide: MLYPSVDALKKEIDSKYSLVSLASKRARQMQEEQNTERLHKYVSHKYVGKALEEVAAGVLTKVSQDESTVYEDEI.

This sequence belongs to the RNA polymerase subunit omega family. The RNAP catalytic core consists of 2 alpha, 1 beta, 1 beta' and 1 omega subunit. When a sigma factor is associated with the core the holoenzyme is formed, which can initiate transcription.

The catalysed reaction is RNA(n) + a ribonucleoside 5'-triphosphate = RNA(n+1) + diphosphate. Its function is as follows. Promotes RNA polymerase assembly. Latches the N- and C-terminal regions of the beta' subunit thereby facilitating its interaction with the beta and alpha subunits. This is DNA-directed RNA polymerase subunit omega from Lysinibacillus sphaericus (strain C3-41).